A 318-amino-acid polypeptide reads, in one-letter code: DNA repair nuclease/redox regulator APEX1 (318 aa).

The necessary for interaction with YBX1, binding to RNA, association together with NPM1 to rRNA, endoribonuclease activity on abasic RNA and localization in the nucleoli stretch occupies residues 1–33 (MPKRGKKGAVAEDGDELRTEPEAKKSKTAAKKN). The disordered stretch occupies residues 1–60 (MPKRGKKGAVAEDGDELRTEPEAKKSKTAAKKNDKEAAGEGPALYEDPPDQKTSPSGKPA). N6-acetyllysine; by EP300 occurs at positions 6 and 7. Residues 8–13 (GAVAED) carry the Nuclear localization signal (NLS) motif. A compositionally biased stretch (basic and acidic residues) spans 16 to 38 (ELRTEPEAKKSKTAAKKNDKEAA). The interval 23–33 (AKKSKTAAKKN) is necessary for interaction with NPM1 and for efficient rRNA binding. N6-acetyllysine is present on residues K27, K31, K32, and K35. S54 carries the phosphoserine modification. A Nuclear export signal (NES) motif is present at residues 64–80 (ICSWNVDGLRAWIKKKG). C65 is subject to S-nitrosocysteine; alternate. C65 and C93 are oxidised to a cystine. Position 70 (D70) interacts with Mg(2+). C93 bears the S-nitrosocysteine; alternate mark. E96 provides a ligand contact to Mg(2+). Y171 is a catalytic residue. Position 197 is an N6-acetyllysine (K197). Mg(2+)-binding residues include D210 and N212. D210 (proton donor/acceptor) is an active-site residue. Phosphothreonine; by CDK5 is present on T233. Residues 289-318 (HSLLPALCDSKIRSKALGSDHCPITLYLAL) form a mitochondrial targeting sequence (MTS) region. Mg(2+) is bound at residue D308. C310 is modified (S-nitrosocysteine).

The protein belongs to the DNA repair enzymes AP/ExoA family. In terms of assembly, monomer. Homodimer; disulfide-linked. Component of the SET complex, composed of at least APEX1, SET, ANP32A, HMGB2, NME1 and TREX1. Associates with the dimer XRCC5/XRCC6 in a DNA-dependent manner. Interacts with SIRT1; the interaction is increased in the context of genotoxic stress. Interacts with HDAC1, HDAC2 and HDAC3; the interactions are not dependent on the APEX1 acetylation status. Interacts with XRCC1; the interaction is induced by SIRT1 and increased with the APEX1 acetylated form. Interacts with NPM1 (via N-terminal domain); the interaction is RNA-dependent and decreases in hydrogen peroxide-damaged cells. Interacts (via N-terminus) with YBX1 (via C-terminus); the interaction is increased in presence of APEX1 acetylated at Lys-6 and Lys-7. Interacts with HNRNPL; the interaction is DNA-dependent. Interacts (via N-terminus) with KPNA1 and KPNA2. Interacts with TXN; the interaction stimulates the FOS/JUN AP-1 complex DNA-binding activity in a redox-dependent manner. Interacts with GZMA, KRT8, MDM2, POLB, PRDX6, PRPF19, RPLP0, TOMM20 and WDR77. Binds to CDK5. It depends on Mg(2+) as a cofactor. The cofactor is Mn(2+). Phosphorylated. Phosphorylation by kinase PKC or casein kinase CK2 results in enhanced redox activity that stimulates binding of the FOS/JUN AP-1 complex to its cognate binding site. AP-endodeoxyribonuclease activity is not affected by CK2-mediated phosphorylation. Phosphorylation of Thr-233 by CDK5 in response to MPP(+)/MPTP (1-methyl-4-phenylpyridinium) reduces AP-endodeoxyribonuclease activity resulting in accumulation of DNA damage and contributing to neuronal death. In terms of processing, acetylated on Lys-6 and Lys-7. Acetylation is increased by the transcriptional coactivator EP300 acetyltransferase, genotoxic agents like H(2)O(2) and methyl methanesulfonate (MMS). Acetylation increases its binding affinity to the negative calcium response element (nCaRE) DNA promoter. The acetylated form induces a stronger binding of YBX1 to the Y-box sequence in the MDR1 promoter than the unacetylated form. Deacetylated on lysines. Lys-6 and Lys-7 are deacetylated by SIRT1. Post-translationally, cleaved at Lys-31 by granzyme A to create the mitochondrial form; leading in reduction of binding to DNA, AP endodeoxyribonuclease activity, redox activation of transcription factors and to enhanced cell death. Cleaved by granzyme K; leading to intracellular ROS accumulation and enhanced cell death after oxidative stress. Cys-69 and Cys-93 are nitrosylated in response to nitric oxide (NO) and lead to the exposure of the nuclear export signal (NES). In terms of processing, ubiquitinated by MDM2; leading to translocation to the cytoplasm and proteasomal degradation.

The protein resides in the nucleus. It is found in the nucleolus. Its subcellular location is the nucleus speckle. The protein localises to the endoplasmic reticulum. It localises to the cytoplasm. The protein resides in the mitochondrion. The enzyme catalyses a deoxyribonucleotide-2'-deoxyribose-5'-monophosphate-DNA + H2O = a 5'-end 2'-deoxyribose-5'-monophosphate-DNA + a 3'-end 2'-deoxyribonucleotide-DNA + H(+). It carries out the reaction Exonucleolytic cleavage in the 3'- to 5'-direction to yield nucleoside 5'-phosphates.. It catalyses the reaction a 3'-end 2'-deoxyribonucleotide-3'-phosphoglycolate-DNA + H2O = 2-phosphoglycolate + a 3'-end 2'-deoxyribonucleotide-DNA + H(+). The catalysed reaction is a 3'-end 2'-deoxyribonucleotide-8-oxoguanine-DNA + H2O = 8-oxo-dGMP + a 3'-end 2'-deoxyribonucleotide-DNA + H(+). With respect to regulation, NPM1 stimulates endodeoxyribonuclease activity on double-stranded DNA with AP sites, but inhibits endoribonuclease activity on single-stranded RNA containing AP sites. In terms of biological role, multifunctional protein that plays a central role in the cellular response to oxidative stress. The two major activities of APEX1 are DNA repair and redox regulation of transcriptional factors. Functions as an apurinic/apyrimidinic (AP) endodeoxyribonuclease in the base excision repair (BER) pathway of DNA lesions induced by oxidative and alkylating agents. Initiates repair of AP sites in DNA by catalyzing hydrolytic incision of the phosphodiester backbone immediately adjacent to the damage, generating a single-strand break with 5'-deoxyribose phosphate and 3'-hydroxyl ends. Also incises at AP sites in the DNA strand of DNA/RNA hybrids, single-stranded DNA regions of R-loop structures, and single-stranded RNA molecules. Operates at switch sites of immunoglobulin (Ig) constant regions where it mediates Ig isotype class switch recombination. Processes AP sites induced by successive action of AICDA and UNG. Generates staggered nicks in opposite DNA strands resulting in the formation of double-strand DNA breaks that are finally resolved via non-homologous end joining repair pathway. Has 3'-5' exodeoxyribonuclease activity on mismatched deoxyribonucleotides at the 3' termini of nicked or gapped DNA molecules during short-patch BER. Possesses DNA 3' phosphodiesterase activity capable of removing lesions (such as phosphoglycolate and 8-oxoguanine) blocking the 3' side of DNA strand breaks. Also acts as an endoribonuclease involved in the control of single-stranded RNA metabolism. Plays a role in regulating MYC mRNA turnover by preferentially cleaving in between UA and CA dinucleotides of the MYC coding region determinant (CRD). In association with NMD1, plays a role in the rRNA quality control process during cell cycle progression. Acts as a loading factor for POLB onto non-incised AP sites in DNA and stimulates the 5'-terminal deoxyribose 5'-phosphate (dRp) excision activity of POLB. Exerts reversible nuclear redox activity to regulate DNA binding affinity and transcriptional activity of transcriptional factors by controlling the redox status of their DNA-binding domain, such as the FOS/JUN AP-1 complex after exposure to IR. Involved in calcium-dependent down-regulation of parathyroid hormone (PTH) expression by binding to negative calcium response elements (nCaREs). Together with HNRNPL or the dimer XRCC5/XRCC6, associates with nCaRE, acting as an activator of transcriptional repression. May also play a role in the epigenetic regulation of gene expression by participating in DNA demethylation. Stimulates the YBX1-mediated MDR1 promoter activity, when acetylated at Lys-6 and Lys-7, leading to drug resistance. Plays a role in protection from granzyme-mediated cellular repair leading to cell death. Binds DNA and RNA. Associates, together with YBX1, on the MDR1 promoter. Together with NPM1, associates with rRNA. The protein is DNA repair nuclease/redox regulator APEX1 (APEX1) of Pan paniscus (Pygmy chimpanzee).